The sequence spans 316 residues: Transaldolase (316 aa).

Residue lysine 127 is the Schiff-base intermediate with substrate of the active site.

It belongs to the transaldolase family. Type 2 subfamily.

The protein resides in the cytoplasm. It carries out the reaction D-sedoheptulose 7-phosphate + D-glyceraldehyde 3-phosphate = D-erythrose 4-phosphate + beta-D-fructose 6-phosphate. It participates in carbohydrate degradation; pentose phosphate pathway; D-glyceraldehyde 3-phosphate and beta-D-fructose 6-phosphate from D-ribose 5-phosphate and D-xylulose 5-phosphate (non-oxidative stage): step 2/3. Transaldolase is important for the balance of metabolites in the pentose-phosphate pathway. This Helicobacter pylori (strain P12) protein is Transaldolase.